Reading from the N-terminus, the 234-residue chain is Proteasome subunit beta (234 aa).

The disordered stretch occupies residues 1–35 (MNPDLNMNPHDSGRTDPYAPELGEIATDEGDGENV). A propeptide spans 1-39 (MNPDLNMNPHDSGRTDPYAPELGEIATDEGDGENVTKTG) (removed in mature form; by autocatalysis). Thr40 acts as the Nucleophile in catalysis.

It belongs to the peptidase T1B family. In terms of assembly, the 20S proteasome core is composed of 14 alpha and 14 beta subunits that assemble into four stacked heptameric rings, resulting in a barrel-shaped structure. The two inner rings, each composed of seven catalytic beta subunits, are sandwiched by two outer rings, each composed of seven alpha subunits. The catalytic chamber with the active sites is on the inside of the barrel. Has a gated structure, the ends of the cylinder being occluded by the N-termini of the alpha-subunits. Is capped at one or both ends by the proteasome regulatory ATPase, PAN.

Its subcellular location is the cytoplasm. It carries out the reaction Cleavage of peptide bonds with very broad specificity.. With respect to regulation, the formation of the proteasomal ATPase PAN-20S proteasome complex, via the docking of the C-termini of PAN into the intersubunit pockets in the alpha-rings, triggers opening of the gate for substrate entry. Interconversion between the open-gate and close-gate conformations leads to a dynamic regulation of the 20S proteasome proteolysis activity. Its function is as follows. Component of the proteasome core, a large protease complex with broad specificity involved in protein degradation. The sequence is that of Proteasome subunit beta from Halorhabdus utahensis (strain DSM 12940 / JCM 11049 / AX-2).